The sequence spans 253 residues: Imidazole glycerol phosphate synthase subunit HisF (253 aa).

Catalysis depends on residues D11 and D130.

It belongs to the HisA/HisF family. As to quaternary structure, heterodimer of HisH and HisF.

It is found in the cytoplasm. The catalysed reaction is 5-[(5-phospho-1-deoxy-D-ribulos-1-ylimino)methylamino]-1-(5-phospho-beta-D-ribosyl)imidazole-4-carboxamide + L-glutamine = D-erythro-1-(imidazol-4-yl)glycerol 3-phosphate + 5-amino-1-(5-phospho-beta-D-ribosyl)imidazole-4-carboxamide + L-glutamate + H(+). It participates in amino-acid biosynthesis; L-histidine biosynthesis; L-histidine from 5-phospho-alpha-D-ribose 1-diphosphate: step 5/9. IGPS catalyzes the conversion of PRFAR and glutamine to IGP, AICAR and glutamate. The HisF subunit catalyzes the cyclization activity that produces IGP and AICAR from PRFAR using the ammonia provided by the HisH subunit. The protein is Imidazole glycerol phosphate synthase subunit HisF of Cereibacter sphaeroides (strain KD131 / KCTC 12085) (Rhodobacter sphaeroides).